The following is a 176-amino-acid chain: Cytochrome b (176 aa).

3 helical membrane-spanning segments follow: residues 33-53, 77-98, and 113-133; these read FGSL…FLAM, WLLR…YLHI, and WNVG…GYVL. The heme b site is built by His-83 and His-97.

Belongs to the cytochrome b family. As to quaternary structure, the cytochrome bc1 complex contains 11 subunits: 3 respiratory subunits (MT-CYB, CYC1 and UQCRFS1), 2 core proteins (UQCRC1 and UQCRC2) and 6 low-molecular weight proteins (UQCRH/QCR6, UQCRB/QCR7, UQCRQ/QCR8, UQCR10/QCR9, UQCR11/QCR10 and a cleavage product of UQCRFS1). This cytochrome bc1 complex then forms a dimer. The cofactor is heme b.

Its subcellular location is the mitochondrion inner membrane. Its function is as follows. Component of the ubiquinol-cytochrome c reductase complex (complex III or cytochrome b-c1 complex) that is part of the mitochondrial respiratory chain. The b-c1 complex mediates electron transfer from ubiquinol to cytochrome c. Contributes to the generation of a proton gradient across the mitochondrial membrane that is then used for ATP synthesis. The protein is Cytochrome b (MT-CYB) of Promops centralis (Big crested mastiff bat).